Consider the following 390-residue polypeptide: GTPase Obg (390 aa).

Residues 1-159 (MKFVDEASIL…RELLLELMLL (159 aa)) form the Obg domain. The tract at residues 127 to 147 (NTRFKSSVNRTPRQKTNGTPG) is disordered. Positions 129–145 (RFKSSVNRTPRQKTNGT) are enriched in polar residues. Residues 160–333 (ADVGMLGMPN…LCWDVMTFII (174 aa)) enclose the OBG-type G domain. GTP is bound by residues 166-173 (GMPNAGKS), 191-195 (FTTLV), 213-216 (DIPG), 283-286 (NKID), and 314-316 (SAA). Residues Ser-173 and Thr-193 each coordinate Mg(2+).

Belongs to the TRAFAC class OBG-HflX-like GTPase superfamily. OBG GTPase family. As to quaternary structure, monomer. Mg(2+) is required as a cofactor.

It localises to the cytoplasm. Its function is as follows. An essential GTPase which binds GTP, GDP and possibly (p)ppGpp with moderate affinity, with high nucleotide exchange rates and a fairly low GTP hydrolysis rate. Plays a role in control of the cell cycle, stress response, ribosome biogenesis and in those bacteria that undergo differentiation, in morphogenesis control. The polypeptide is GTPase Obg (Escherichia coli (strain K12 / DH10B)).